Here is a 287-residue protein sequence, read N- to C-terminus: MSPHPTALLGLVLCLAQTIHTQEEDLPRPSISAEPGTVIPLGSHVTFVCRGPVGVQTFRLERDSRSTYNDTEDVSQASPSESEARFRIDSVREGNAGLYRCIYYKPPKWSEQSDYLELLVKESSGGPDSPDTEPGSSAGPTQRPSDNSHNEHAPASQGLKAEHLYILIGVSVVFLFCLLLLVLFCLHRQNQIKQGPPRSKDEEQKPQQRPDLAVDVLERTADKATVNGLPEKDRETDTSALAAGSSQEVTYAQLDHWALTQRTARAVSPQSTKPMAESITYAAVARH.

An N-terminal signal peptide occupies residues 1 to 21; the sequence is MSPHPTALLGLVLCLAQTIHT. Over 22-165 the chain is Extracellular; it reads QEEDLPRPSI…SQGLKAEHLY (144 aa). The Ig-like C2-type domain maps to 29–117; that stretch reads PSISAEPGTV…KWSEQSDYLE (89 aa). C49 and C101 are joined by a disulfide. N-linked (GlcNAc...) asparagine glycosylation occurs at N69. The segment at 121–155 is disordered; the sequence is KESSGGPDSPDTEPGSSAGPTQRPSDNSHNEHAPA. Residues 134–145 show a composition bias toward polar residues; that stretch reads PGSSAGPTQRPS. The helical transmembrane segment at 166–186 threads the bilayer; the sequence is ILIGVSVVFLFCLLLLVLFCL. The Cytoplasmic segment spans residues 187-287; it reads HRQNQIKQGP…SITYAAVARH (101 aa). Residues 192 to 211 are disordered; sequence IKQGPPRSKDEEQKPQQRPD. The segment covering 198–208 has biased composition (basic and acidic residues); the sequence is RSKDEEQKPQQ. Short sequence motifs (ITIM motif) lie at residues 249–254 and 279–284; these read VTYAQL and ITYAAV. 2 positions are modified to phosphotyrosine: Y251 and Y281.

Interacts with SH2 domains of tyrosine-protein phosphatases PTPN6 and PTPN11. The interaction with PTPN6 is constitutive. Interacts with the SH2 domain of CSK. Binds with high affinity to extracellular matrix collagens, the interaction is functionally important. In terms of processing, phosphorylation at Tyr-251 and Tyr-281 activates it. May be phosphorylated by LCK. N-glycosylated. As to expression, expressed on the majority of peripheral mononuclear cells, including natural killer (NK) cells, T-cells, B-cells, monocytes, and dendritic cells. Highly expressed in naive T-cells and B-cells but no expression on germinal center B-cells. Abnormally low expression in naive B-cells from HIV-1 infected patients. Very low expression in NK cells from a patient with chronic active Epstein-Barr virus infection.

Its subcellular location is the cell membrane. In terms of biological role, functions as an inhibitory receptor that plays a constitutive negative regulatory role on cytolytic function of natural killer (NK) cells, B-cells and T-cells. Activation by Tyr phosphorylation results in recruitment and activation of the phosphatases PTPN6 and PTPN11. It also reduces the increase of intracellular calcium evoked by B-cell receptor ligation. May also play its inhibitory role independently of SH2-containing phosphatases. Modulates cytokine production in CD4+ T-cells, down-regulating IL2 and IFNG production while inducing secretion of transforming growth factor beta. Also down-regulates IgG and IgE production in B-cells as well as IL8, IL10 and TNF secretion. Inhibits proliferation and induces apoptosis in myeloid leukemia cell lines as well as prevents nuclear translocation of NF-kappa-B p65 subunit/RELA and phosphorylation of I-kappa-B alpha/CHUK in these cells. Inhibits the differentiation of peripheral blood precursors towards dendritic cells. The protein is Leukocyte-associated immunoglobulin-like receptor 1 (LAIR1) of Homo sapiens (Human).